Reading from the N-terminus, the 101-residue chain is NAD(P)H-quinone oxidoreductase subunit 4L, chloroplastic (101 aa).

3 helical membrane-spanning segments follow: residues 2 to 22 (MFEL…YGLI), 32 to 52 (ICLE…SDLF), and 61 to 81 (IFAI…LSIL).

Belongs to the complex I subunit 4L family. As to quaternary structure, NDH is composed of at least 16 different subunits, 5 of which are encoded in the nucleus.

It is found in the plastid. The protein resides in the chloroplast thylakoid membrane. The catalysed reaction is a plastoquinone + NADH + (n+1) H(+)(in) = a plastoquinol + NAD(+) + n H(+)(out). It carries out the reaction a plastoquinone + NADPH + (n+1) H(+)(in) = a plastoquinol + NADP(+) + n H(+)(out). Its function is as follows. NDH shuttles electrons from NAD(P)H:plastoquinone, via FMN and iron-sulfur (Fe-S) centers, to quinones in the photosynthetic chain and possibly in a chloroplast respiratory chain. The immediate electron acceptor for the enzyme in this species is believed to be plastoquinone. Couples the redox reaction to proton translocation, and thus conserves the redox energy in a proton gradient. This is NAD(P)H-quinone oxidoreductase subunit 4L, chloroplastic from Lolium perenne (Perennial ryegrass).